The primary structure comprises 253 residues: Indole-3-glycerol phosphate synthase (253 aa).

This sequence belongs to the TrpC family.

The enzyme catalyses 1-(2-carboxyphenylamino)-1-deoxy-D-ribulose 5-phosphate + H(+) = (1S,2R)-1-C-(indol-3-yl)glycerol 3-phosphate + CO2 + H2O. Its pathway is amino-acid biosynthesis; L-tryptophan biosynthesis; L-tryptophan from chorismate: step 4/5. In Bacillus cereus (strain G9842), this protein is Indole-3-glycerol phosphate synthase.